A 621-amino-acid chain; its full sequence is Chaperone protein HscA homolog (621 aa).

The protein belongs to the heat shock protein 70 family.

Its function is as follows. Chaperone involved in the maturation of iron-sulfur cluster-containing proteins. Has a low intrinsic ATPase activity which is markedly stimulated by HscB. The chain is Chaperone protein HscA homolog from Ralstonia nicotianae (strain ATCC BAA-1114 / GMI1000) (Ralstonia solanacearum).